Consider the following 776-residue polypeptide: Structure-specific endonuclease subunit SLX4 (776 aa).

The segment covering Glu201 to Asp217 has biased composition (acidic residues). Disordered stretches follow at residues Glu201–Gly223, Lys263–Asn283, and Pro507–Ser531.

The protein belongs to the SLX4 family. As to quaternary structure, forms a heterodimer with SLX1. In terms of processing, phosphorylated in response to DNA damage.

It localises to the nucleus. In terms of biological role, regulatory subunit of the SLX1-SLX4 structure-specific endonuclease that resolves DNA secondary structures generated during DNA repair and recombination. Has endonuclease activity towards branched DNA substrates, introducing single-strand cuts in duplex DNA close to junctions with ss-DNA. The protein is Structure-specific endonuclease subunit SLX4 of Candida albicans (strain SC5314 / ATCC MYA-2876) (Yeast).